We begin with the raw amino-acid sequence, 122 residues long: Large ribosomal subunit protein uL14 (122 aa).

This sequence belongs to the universal ribosomal protein uL14 family. As to quaternary structure, part of the 50S ribosomal subunit. Forms a cluster with proteins L3 and L19. In the 70S ribosome, L14 and L19 interact and together make contacts with the 16S rRNA in bridges B5 and B8.

Its function is as follows. Binds to 23S rRNA. Forms part of two intersubunit bridges in the 70S ribosome. The sequence is that of Large ribosomal subunit protein uL14 from Caldicellulosiruptor saccharolyticus (strain ATCC 43494 / DSM 8903 / Tp8T 6331).